The primary structure comprises 363 residues: Galactokinase (363 aa).

Residue 16–19 (EHTD) participates in substrate binding. ATP-binding positions include Ser50 and 103–109 (GSGLSSS). Residues Ser109 and Glu141 each contribute to the Mg(2+) site. The active-site Proton acceptor is the Asp153. Residue Tyr205 coordinates substrate.

This sequence belongs to the GHMP kinase family. GalK subfamily.

It is found in the cytoplasm. It carries out the reaction alpha-D-galactose + ATP = alpha-D-galactose 1-phosphate + ADP + H(+). Its pathway is carbohydrate metabolism; galactose metabolism. Functionally, catalyzes the transfer of the gamma-phosphate of ATP to D-galactose to form alpha-D-galactose-1-phosphate (Gal-1-P). The chain is Galactokinase from Mycobacterium tuberculosis (strain ATCC 25177 / H37Ra).